The sequence spans 338 residues: Lipoate-protein ligase A (338 aa).

The BPL/LPL catalytic domain maps to 29–216; that stretch reads SPNQRVLFLW…AFFAYYDEQV (188 aa). ATP-binding positions include Arg-71, 76 to 79, and Lys-134; that span reads GAVF. Residue Lys-134 participates in (R)-lipoate binding.

It belongs to the LplA family. In terms of assembly, monomer.

It localises to the cytoplasm. The catalysed reaction is L-lysyl-[lipoyl-carrier protein] + (R)-lipoate + ATP = N(6)-[(R)-lipoyl]-L-lysyl-[lipoyl-carrier protein] + AMP + diphosphate + H(+). It functions in the pathway protein modification; protein lipoylation via exogenous pathway; protein N(6)-(lipoyl)lysine from lipoate: step 1/2. Its pathway is protein modification; protein lipoylation via exogenous pathway; protein N(6)-(lipoyl)lysine from lipoate: step 2/2. In terms of biological role, catalyzes both the ATP-dependent activation of exogenously supplied lipoate to lipoyl-AMP and the transfer of the activated lipoyl onto the lipoyl domains of lipoate-dependent enzymes. In Yersinia pseudotuberculosis serotype O:1b (strain IP 31758), this protein is Lipoate-protein ligase A.